The chain runs to 269 residues: Phosphate import ATP-binding protein PstB 2 (269 aa).

The region spanning 23-264 (LEVKDLSIYY…PKKQKTEDYI (242 aa)) is the ABC transporter domain. Position 55-62 (55-62 (GPSGCGKS)) interacts with ATP.

The protein belongs to the ABC transporter superfamily. Phosphate importer (TC 3.A.1.7) family. As to quaternary structure, the complex is composed of two ATP-binding proteins (PstB), two transmembrane proteins (PstC and PstA) and a solute-binding protein (PstS).

It localises to the cell membrane. It catalyses the reaction phosphate(out) + ATP + H2O = ADP + 2 phosphate(in) + H(+). Functionally, part of the ABC transporter complex PstSACB involved in phosphate import. Responsible for energy coupling to the transport system. In Bacillus subtilis (strain 168), this protein is Phosphate import ATP-binding protein PstB 2.